Consider the following 149-residue polypeptide: Lymphocyte antigen 6 complex locus protein G5c (149 aa).

The N-terminal stretch at 1–41 is a signal peptide; it reads MLFMAGPAASWSLRPLGLHGVPQALCAVLLTVLVMKTLVLG. A UPAR/Ly6 domain is found at 59 to 149; the sequence is LNCYRCLLET…NPDNRKNSMH (91 aa). Cystine bridges form between Cys-61-Cys-88, Cys-64-Cys-73, Cys-80-Cys-106, Cys-115-Cys-132, and Cys-133-Cys-138. An N-linked (GlcNAc...) asparagine glycan is attached at Asn-95.

As to quaternary structure, forms oligomers. N-glycosylated. In terms of tissue distribution, detected in adult brain.

It is found in the secreted. Functionally, may have a role in hematopoietic cell differentiation. The chain is Lymphocyte antigen 6 complex locus protein G5c (Ly6g5c) from Mus musculus (Mouse).